A 245-amino-acid chain; its full sequence is NAD-dependent protein deacylase 1 (245 aa).

The 243-residue stretch at 1–243 (MDEKLLKTIA…DELVRHVRKA (243 aa)) folds into the Deacetylase sirtuin-type domain. 20 to 39 (GAGVSAESGIPTFRGKDGLW) is an NAD(+) binding site. Positions 64 and 67 each coordinate substrate. 98–101 (QNVD) serves as a coordination point for NAD(+). Histidine 116 acts as the Proton acceptor in catalysis. 4 residues coordinate Zn(2+): cysteine 124, cysteine 127, cysteine 145, and cysteine 148. NAD(+) contacts are provided by residues 185-187 (GTS), 211-213 (NPD), and alanine 229.

The protein belongs to the sirtuin family. Class III subfamily. Zn(2+) is required as a cofactor.

The protein localises to the cytoplasm. It catalyses the reaction N(6)-acetyl-L-lysyl-[protein] + NAD(+) + H2O = 2''-O-acetyl-ADP-D-ribose + nicotinamide + L-lysyl-[protein]. The catalysed reaction is N(6)-succinyl-L-lysyl-[protein] + NAD(+) + H2O = 2''-O-succinyl-ADP-D-ribose + nicotinamide + L-lysyl-[protein]. Functionally, NAD-dependent lysine deacetylase and desuccinylase that specifically removes acetyl and succinyl groups on target proteins. Modulates the activities of several proteins which are inactive in their acylated form. Deacetylates the N-terminal lysine residue of Alba, the major archaeal chromatin protein and that, in turn, increases Alba's DNA binding affinity, thereby repressing transcription. The chain is NAD-dependent protein deacylase 1 from Archaeoglobus fulgidus (strain ATCC 49558 / DSM 4304 / JCM 9628 / NBRC 100126 / VC-16).